The primary structure comprises 534 residues: Peptide chain release factor 3 (534 aa).

A tr-type G domain is found at 9 to 278 (ARRRTFAIIS…FFIEHAPPPQ (270 aa)). GTP contacts are provided by residues 18–25 (SHPDAGKT), 86–90 (DTPGH), and 140–143 (NKLD).

Belongs to the TRAFAC class translation factor GTPase superfamily. Classic translation factor GTPase family. PrfC subfamily.

It is found in the cytoplasm. Functionally, increases the formation of ribosomal termination complexes and stimulates activities of RF-1 and RF-2. It binds guanine nucleotides and has strong preference for UGA stop codons. It may interact directly with the ribosome. The stimulation of RF-1 and RF-2 is significantly reduced by GTP and GDP, but not by GMP. This is Peptide chain release factor 3 from Xanthomonas oryzae pv. oryzae (strain MAFF 311018).